We begin with the raw amino-acid sequence, 164 residues long: ATP synthase subunit b 1 (164 aa).

The helical transmembrane segment at 4–24 (MELAELWVAVAFFVFVGILLY) threads the bilayer.

It belongs to the ATPase B chain family. In terms of assembly, F-type ATPases have 2 components, F(1) - the catalytic core - and F(0) - the membrane proton channel. F(1) has five subunits: alpha(3), beta(3), gamma(1), delta(1), epsilon(1). F(0) has three main subunits: a(1), b(2) and c(10-14). The alpha and beta chains form an alternating ring which encloses part of the gamma chain. F(1) is attached to F(0) by a central stalk formed by the gamma and epsilon chains, while a peripheral stalk is formed by the delta and b chains.

It is found in the cell inner membrane. Functionally, f(1)F(0) ATP synthase produces ATP from ADP in the presence of a proton or sodium gradient. F-type ATPases consist of two structural domains, F(1) containing the extramembraneous catalytic core and F(0) containing the membrane proton channel, linked together by a central stalk and a peripheral stalk. During catalysis, ATP synthesis in the catalytic domain of F(1) is coupled via a rotary mechanism of the central stalk subunits to proton translocation. In terms of biological role, component of the F(0) channel, it forms part of the peripheral stalk, linking F(1) to F(0). In Azorhizobium caulinodans (strain ATCC 43989 / DSM 5975 / JCM 20966 / LMG 6465 / NBRC 14845 / NCIMB 13405 / ORS 571), this protein is ATP synthase subunit b 1.